The sequence spans 414 residues: Na(+)-translocating NADH-quinone reductase subunit B (414 aa).

4 helical membrane-spanning segments follow: residues 23 to 40, 56 to 76, 129 to 149, and 164 to 184; these read WFAL…PGLV, IMIM…YNAG, FLPI…LFCM, and ILFA…LGIT. Thr236 carries the post-translational modification FMN phosphoryl threonine. The next 5 membrane-spanning stretches (helical) occupy residues 268 to 288, 297 to 317, 325 to 345, 358 to 378, and 381 to 401; these read IPGS…AMIV, IIAG…VVGS, MPWH…FMAT, WWYG…NPAY, and GMML…HVVI.

Belongs to the NqrB/RnfD family. In terms of assembly, composed of six subunits; NqrA, NqrB, NqrC, NqrD, NqrE and NqrF. FMN serves as cofactor.

The protein resides in the cell inner membrane. The catalysed reaction is a ubiquinone + n Na(+)(in) + NADH + H(+) = a ubiquinol + n Na(+)(out) + NAD(+). In terms of biological role, NQR complex catalyzes the reduction of ubiquinone-1 to ubiquinol by two successive reactions, coupled with the transport of Na(+) ions from the cytoplasm to the periplasm. NqrA to NqrE are probably involved in the second step, the conversion of ubisemiquinone to ubiquinol. The protein is Na(+)-translocating NADH-quinone reductase subunit B of Vibrio parahaemolyticus serotype O3:K6 (strain RIMD 2210633).